The chain runs to 651 residues: Probable potassium transport system protein Kup (651 aa).

The span at 1–16 (MRDSPGSKSSSERWHD) shows a compositional bias: basic and acidic residues. The interval 1 to 31 (MRDSPGSKSSSERWHDTMAVSDPTAEGKDES) is disordered. Helical transmembrane passes span 38–58 (FWAL…TSPL), 74–94 (VTPA…FIVV), 129–149 (LLLL…SMIT), 168–188 (LQDY…AVQS), 197–217 (AFAP…VLHI), 232–252 (AIHF…LVFL), 276–296 (WFCL…ALIL), 309–329 (LAPA…TVIA), 366–386 (IYLP…VLLF), 396–416 (YGIA…VVVW), 423–443 (PAAA…FFSA), and 448–468 (LFDG…LIWT).

The protein belongs to the HAK/KUP transporter (TC 2.A.72) family.

It is found in the cell inner membrane. The enzyme catalyses K(+)(in) + H(+)(in) = K(+)(out) + H(+)(out). Functionally, transport of potassium into the cell. Likely operates as a K(+):H(+) symporter. The protein is Probable potassium transport system protein Kup of Nitrobacter winogradskyi (strain ATCC 25391 / DSM 10237 / CIP 104748 / NCIMB 11846 / Nb-255).